The sequence spans 380 residues: MAYDLAKISTTALMRPAFEAGIGFTRLDERIARSPVGSGWIERMHFLDACASLWIDGELVHLEDLVLHDATRDIRTPTHELTIARDVLRTRRRIAAQSPDWPLSTEGIRTLRQTSDINPVGVEAVEPADVIRPAVAIDPEGEGDDGNDAKDLPGVDYAAIDAVLARSEAAIEDARRPGRAGANSWAAEKDPLVYDLDWDEDARLVEWRSVLRQAQDLPAVLQAIVALDAWNELSVLQHAPWLGRLLCASILREAGITTGAHLAAINLGLKTIPVDRRRHRGRETRLLAIAHGLLAAAEIGMKEHDRLTLAKTMMDRKLDGRRTSSKLPELVELVMAKPLVSAGMVSKTLEVTPQAARRIVTELGLREMTGRGRFRAWGVI.

This is an uncharacterized protein from Sinorhizobium fredii (strain NBRC 101917 / NGR234).